The chain runs to 745 residues: Cellulose synthase 1 catalytic subunit [UDP-forming] (745 aa).

3 consecutive transmembrane segments (helical) span residues 29-49, 106-126, and 153-173; these read YVVG…TLSL, GILG…LFLS, and IFIP…LGAL. Residues 147 to 240 are catalytic subdomain A; the sequence is EWPTVDIFIP…HILILDCDHI (94 aa). Residue D189 is part of the active site. Substrate contacts are provided by D236 and D238. The interval 317–377 is catalytic subdomain B; that stretch reads KAIEEIGGFA…GQRMRWARGM (61 aa). D333 is a catalytic residue. 6 helical membrane-spanning segments follow: residues 407–427, 430–450, 468–488, 515–535, 547–567, and 649–669; these read FFFA…LFFS, IIAA…FHSI, VYET…MLFP, NIIF…ALIF, ALNC…ISVG, and AVFT…RFVF. The PilZ domain maps to 572 to 670; sequence QLRQSHRIEA…EAAVVRFVFG (99 aa). Positions 708–717 are enriched in basic residues; that stretch reads IAHSRPKKKP. A disordered region spans residues 708–745; sequence IAHSRPKKKPIALPVERREPTTSQGGQKQEGKISRAAS. Over residues 736 to 745 the composition is skewed to basic and acidic residues; that stretch reads QEGKISRAAS.

It belongs to the glycosyltransferase 2 family. It depends on Mg(2+) as a cofactor.

It localises to the cell inner membrane. The enzyme catalyses [(1-&gt;4)-beta-D-glucosyl](n) + UDP-alpha-D-glucose = [(1-&gt;4)-beta-D-glucosyl](n+1) + UDP + H(+). It functions in the pathway glycan metabolism; bacterial cellulose biosynthesis. Its activity is regulated as follows. Activated by bis-(3'-5') cyclic diguanylic acid (c-di-GMP). In terms of biological role, catalytic subunit of cellulose synthase. It polymerizes uridine 5'-diphosphate glucose to cellulose. The thick cellulosic mats generated by this enzyme probably provide a specialized protective environment to the bacterium. This Komagataeibacter xylinus (Gluconacetobacter xylinus) protein is Cellulose synthase 1 catalytic subunit [UDP-forming] (bcsAI).